The chain runs to 317 residues: Ribosomal protein L11 methyltransferase (317 aa).

S-adenosyl-L-methionine is bound by residues threonine 158, glycine 179, aspartate 201, and asparagine 244.

The protein belongs to the methyltransferase superfamily. PrmA family.

Its subcellular location is the cytoplasm. The enzyme catalyses L-lysyl-[protein] + 3 S-adenosyl-L-methionine = N(6),N(6),N(6)-trimethyl-L-lysyl-[protein] + 3 S-adenosyl-L-homocysteine + 3 H(+). Methylates ribosomal protein L11. This chain is Ribosomal protein L11 methyltransferase, found in Lactococcus lactis subsp. lactis (strain IL1403) (Streptococcus lactis).